The sequence spans 125 residues: NADPH-dependent 7-cyano-7-deazaguanine reductase (125 aa).

The active-site Thioimide intermediate is the cysteine 41. Aspartate 48 serves as the catalytic Proton donor. Substrate is bound by residues 63 to 65 (IEL) and 82 to 83 (HE).

It belongs to the GTP cyclohydrolase I family. QueF type 1 subfamily.

It localises to the cytoplasm. The catalysed reaction is 7-aminomethyl-7-carbaguanine + 2 NADP(+) = 7-cyano-7-deazaguanine + 2 NADPH + 3 H(+). It participates in tRNA modification; tRNA-queuosine biosynthesis. In terms of biological role, catalyzes the NADPH-dependent reduction of 7-cyano-7-deazaguanine (preQ0) to 7-aminomethyl-7-deazaguanine (preQ1). The sequence is that of NADPH-dependent 7-cyano-7-deazaguanine reductase from Sulfurovum sp. (strain NBC37-1).